The primary structure comprises 186 residues: UPF0157 protein SCO7215 (186 aa).

It belongs to the UPF0157 (GrpB) family.

This Streptomyces coelicolor (strain ATCC BAA-471 / A3(2) / M145) protein is UPF0157 protein SCO7215.